A 1235-amino-acid chain; its full sequence is DNA polymerase (1235 aa).

Positions 773 to 887 constitute a DOD-type homing endonuclease domain; that stretch reads LLGYYISSGD…LILLLNSIGV (115 aa).

This sequence belongs to the DNA polymerase type-B family. Post-translationally, this protein undergoes a protein self splicing that involves a post-translational excision of the intervening region (intein) followed by peptide ligation.

The enzyme catalyses DNA(n) + a 2'-deoxyribonucleoside 5'-triphosphate = DNA(n+1) + diphosphate. In Pyrococcus horikoshii (strain ATCC 700860 / DSM 12428 / JCM 9974 / NBRC 100139 / OT-3), this protein is DNA polymerase (pol).